The following is a 201-amino-acid chain: LexA repressor (201 aa).

Positions 28–48 (LREIGGHLGINGTLGVMKHLD) form a DNA-binding region, H-T-H motif. Catalysis depends on for autocatalytic cleavage activity residues S120 and K157.

It belongs to the peptidase S24 family. As to quaternary structure, homodimer.

It catalyses the reaction Hydrolysis of Ala-|-Gly bond in repressor LexA.. Represses a number of genes involved in the response to DNA damage (SOS response), including recA and lexA. In the presence of single-stranded DNA, RecA interacts with LexA causing an autocatalytic cleavage which disrupts the DNA-binding part of LexA, leading to derepression of the SOS regulon and eventually DNA repair. In Geotalea uraniireducens (strain Rf4) (Geobacter uraniireducens), this protein is LexA repressor.